A 361-amino-acid polypeptide reads, in one-letter code: Hydroxyproline O-arabinosyltransferase PLENTY (361 aa).

The chain crosses the membrane as a helical; Signal-anchor span at residues 13–33 (LLMLLMVLGFFFATYNLVSMI).

It localises to the golgi apparatus membrane. The enzyme catalyses trans-4-hydroxy-L-prolyl-[protein] + UDP-beta-L-arabinofuranose = O-(beta-L-arabinofuranosyl)-trans-4-hydroxy-L-prolyl-[protein] + UDP + H(+). Its function is as follows. Glycosyltransferase involved in the O-arabinosylation of several proteins including extensins and small signaling peptides. Catalyzes the transfer of the initial L-arabinose to the hydroxyl group of Hyp residues. Probably involved in the arabinosylation of CLAVATA3/ESR-related (CLE) signaling peptides that move from root to shoot, to interact with receptor kinase signaling that regulates nodulation. Involved in long distance nodulation signaling events. Involved in the autoregulation of nodulation (AON), a long distance systemic signaling from root to shoot and back again, which allows legumes to limit the number of root nodules formed based on available nitrogen and previous rhizobial colonization. In Lotus japonicus (Lotus corniculatus var. japonicus), this protein is Hydroxyproline O-arabinosyltransferase PLENTY.